The chain runs to 155 residues: 2-C-methyl-D-erythritol 2,4-cyclodiphosphate synthase (155 aa).

2 residues coordinate a divalent metal cation: Asp-8 and His-10. 4-CDP-2-C-methyl-D-erythritol 2-phosphate-binding positions include 8-10 (DVH) and 34-35 (HS). His-42 lines the a divalent metal cation pocket. 4-CDP-2-C-methyl-D-erythritol 2-phosphate contacts are provided by residues 56–58 (DIG), 61–65 (FPDSD), 100–106 (AQKPKML), 132–135 (TTEE), Phe-139, and Lys-142.

The protein belongs to the IspF family. Homotrimer. Requires a divalent metal cation as cofactor.

It catalyses the reaction 4-CDP-2-C-methyl-D-erythritol 2-phosphate = 2-C-methyl-D-erythritol 2,4-cyclic diphosphate + CMP. It participates in isoprenoid biosynthesis; isopentenyl diphosphate biosynthesis via DXP pathway; isopentenyl diphosphate from 1-deoxy-D-xylulose 5-phosphate: step 4/6. Functionally, involved in the biosynthesis of isopentenyl diphosphate (IPP) and dimethylallyl diphosphate (DMAPP), two major building blocks of isoprenoid compounds. Catalyzes the conversion of 4-diphosphocytidyl-2-C-methyl-D-erythritol 2-phosphate (CDP-ME2P) to 2-C-methyl-D-erythritol 2,4-cyclodiphosphate (ME-CPP) with a corresponding release of cytidine 5-monophosphate (CMP). This is 2-C-methyl-D-erythritol 2,4-cyclodiphosphate synthase from Clostridium botulinum (strain Okra / Type B1).